Reading from the N-terminus, the 331-residue chain is Probable allantoicase (331 aa).

Belongs to the allantoicase family.

It carries out the reaction allantoate + H2O = (S)-ureidoglycolate + urea. The protein operates within nitrogen metabolism; (S)-allantoin degradation; (S)-ureidoglycolate from allantoate (aminidohydrolase route): step 1/1. The sequence is that of Probable allantoicase from Stutzerimonas stutzeri (strain A1501) (Pseudomonas stutzeri).